Reading from the N-terminus, the 185-residue chain is Tumor necrosis factor receptor superfamily member 17 (185 aa).

Residues 1-49 (MAQQCFHSEYFDSLLHACKPCHLRCSNPPATCQPYCDPSVTSSVKGTYT) are Extracellular-facing. The stretch at 4–36 (QCFHSEYFDSLLHACKPCHLRCSNPPATCQPYC) is one TNFR-Cys repeat. 3 disulfide bridges follow: Cys-5/Cys-18, Cys-21/Cys-32, and Cys-25/Cys-36. A helical; Signal-anchor for type III membrane protein transmembrane segment spans residues 50–70 (VLWIFLGLTLVLSLALFTISF). Over 71–185 (LLRKMNPEAL…MGMEKPTHTR (115 aa)) the chain is Cytoplasmic.

Associates with TRAF1, TRAF2, TRAF3, TRAF5 and TRAF6. Detected in spleen, thymus, bone marrow and heart, and at lower levels in kidney and lung.

The protein localises to the membrane. In terms of biological role, receptor for TNFSF13B/BLyS/BAFF and TNFSF13/APRIL. Promotes B-cell survival and plays a role in the regulation of humoral immunity. Activates NF-kappa-B and JNK. The polypeptide is Tumor necrosis factor receptor superfamily member 17 (Tnfrsf17) (Mus musculus (Mouse)).